A 205-amino-acid polypeptide reads, in one-letter code: Urease accessory protein UreE (205 aa).

Residues A171 to S205 are disordered. Basic residues predominate over residues H177 to G196.

This sequence belongs to the UreE family.

The protein localises to the cytoplasm. In terms of biological role, involved in urease metallocenter assembly. Binds nickel. Probably functions as a nickel donor during metallocenter assembly. In Bordetella parapertussis (strain 12822 / ATCC BAA-587 / NCTC 13253), this protein is Urease accessory protein UreE.